Here is a 461-residue protein sequence, read N- to C-terminus: MSQKNFFDEGKSYGVNDYAGFHFENGADSSLPQVSAQGVVRETDSSNFDASPVASGSGISDVGPFGADFHQLQQHVQTPYGGMTMPASSSSGATSVPPEQDPSLSVSFNRLPKSASTKTKNGRIRSSRREDDNRIPFYDLDVAEGAEDDLQEDFHVEGMKTKSGRKIQRPVAYNPNATALKRKSRKVDMVTLCSVCQRGHSPLSNRIVFCDGCNSPYHQLCHHPPIDDATVQDVDAEWFCMKCQYRRAKQPLETGMTAQDLGLSESDKKMYLSSLPTPHLADLILFCEKSYPSLPIYNPRTRELLGEIRHQLLVSSERQQISLQERLHAKQDEAPSDEPAPVPYTASYVANSGTLYDYPTLIRLAIRNTLSPSKDEIFNWLAQNVPLLPTFHDSASEAIRWMVNKGQLVRSGSIYQIATVEEYPHLQPSLLPTFQRNRKVPKLVPVSFPTDDPQNLCATVL.

The segment at P79–E130 is disordered. Positions P102–T119 are enriched in polar residues. Residues V190–R246 form a PHD-type zinc finger.

In terms of assembly, component of the SWM histone demethylase complex composed of at least lsd1, lsd2, phf1 and phf2.

The protein localises to the nucleus. Component of the SWM histone demethylase complex that specifically demethylates H3K9me2, a specific tag for epigenetic transcriptional activation, thereby acting as a corepressor. Has a role in regulating heterochromatin propagation and euchromatic transcription. In Schizosaccharomyces pombe (strain 972 / ATCC 24843) (Fission yeast), this protein is SWM histone demethylase complex subunit phf1 (phf1).